A 366-amino-acid chain; its full sequence is Putative actin-9 (366 aa).

Belongs to the actin family. In terms of assembly, polymerization of globular actin (G-actin) leads to a structural filament (F-actin) in the form of a two-stranded helix. The binding of profilin to monomeric G-actin cause the sequestration of actin into profilactin complexes, and prevents the polymerization.

It localises to the cytoplasm. The protein localises to the cytoskeleton. Actins are highly conserved proteins that are involved in various types of cell motility and are ubiquitously expressed in all eukaryotic cells. Essential component of cell cytoskeleton; plays an important role in cytoplasmic streaming, cell shape determination, cell division, organelle movement and extension growth. The chain is Putative actin-9 (ACT9) from Arabidopsis thaliana (Mouse-ear cress).